The sequence spans 490 residues: MKLKRLYPPQKAVNSLHSETGTGCEVAGCPPLRKEALLFFAGWGMDETPFMHNLPPNKDLIICYDYRSLDFDSTLLSTYEGIYVVAWSMGVWAASQVLPDSNLPLKQSIAINGTPFPIDDMRGIPPAIFEGTLNNLNEATLQKFRRRMCGSGSAFQAFLEIAPQRPVEELKEELVAIGRQYSELPPSTFVWNKAIIGESDHIFPPKNQEQAWQKYCNEIQRYDGAHYDEKILKENLAPAASSKLLIAQRFTKAIGTYPHEARVQQQIARKMCSLLQQHLPAHSLRRVVEFGCGTGTYSRLLLRSFRPEHLLLNDLCEEMRHSCRDILNERVSFLPGDAEALDFPHGTELITSCSVLQWFEHPDAFFRKCENILNAQGYIAFSTFGKENMKEIRQLTGQGLAYRSREELTASLSALYDIVHTEEEVISLNFNNPMEVLYHLKQTGVTGTCNQSWTRSKLNLFCQEYERLFSPGKGSVSLTYHPIYIIAKKR.

The segment at 1 to 248 (MKLKRLYPPQ…AASSKLLIAQ (248 aa)) is unknown. Positions 249–490 (RFTKAIGTYP…HPIYIIAKKR (242 aa)) are malonyl-CoA O-methyltransferase.

The protein belongs to the methyltransferase superfamily.

The catalysed reaction is malonyl-[ACP] + S-adenosyl-L-methionine = malonyl-[ACP] methyl ester + S-adenosyl-L-homocysteine. It participates in cofactor biosynthesis; biotin biosynthesis. In terms of biological role, converts the free carboxyl group of a malonyl-thioester to its methyl ester by transfer of a methyl group from S-adenosyl-L-methionine (SAM). It allows to synthesize pimeloyl-ACP via the fatty acid synthetic pathway. The protein is Malonyl-[acyl-carrier protein] O-methyltransferase (bioC) of Bacteroides fragilis (strain 638R).